The primary structure comprises 262 residues: Ribose-5-phosphate isomerase A (262 aa).

Residues 33-36 (TGST), 89-92 (DGTD), and 102-105 (KGGG) each bind substrate. The Proton acceptor role is filled by E111. K129 is a substrate binding site.

The protein belongs to the ribose 5-phosphate isomerase family. As to quaternary structure, homodimer.

The enzyme catalyses aldehydo-D-ribose 5-phosphate = D-ribulose 5-phosphate. It participates in carbohydrate degradation; pentose phosphate pathway; D-ribose 5-phosphate from D-ribulose 5-phosphate (non-oxidative stage): step 1/1. Functionally, catalyzes the reversible conversion of ribose-5-phosphate to ribulose 5-phosphate. This chain is Ribose-5-phosphate isomerase A, found in Jannaschia sp. (strain CCS1).